We begin with the raw amino-acid sequence, 308 residues long: MVASAEADVPPPTMLVKIASAGLSACLADIITFPLDTAKVRLQVQGERPNAPGVKYKGVLGTIATVAKTEGPLKLYGGLPAGIQRQISFASLRIGLYDTVQEYFNAHRKTPATLGNKISAGLMTGCVTVFIGQPTEVAKVRMQAQSSLHWLKPRYSGTYNAYYVIVKTEGFLGLWKGTSLNLTRNVIINCTELVVYDVLKEALVKNNVLADDIPCHLLAALTAGFCTTALASPVDVVKTRFINSPPGYYPHVHNCALNMLQKEGLRAFFKGFVPSFLRLGSWTVIMHVTFEQLKKELMKSRQTVDCAT.

Residues 1-10 are Mitochondrial intermembrane-facing; sequence MVASAEADVP. Residues 11–33 form a helical membrane-spanning segment; sequence PPTMLVKIASAGLSACLADIITF. 3 Solcar repeats span residues 11-103, 112-202, and 211-296; these read PPTM…VQEY, ATLG…LKEA, and DDIP…LKKE. The Mitochondrial matrix portion of the chain corresponds to 34–74; the sequence is PLDTAKVRLQVQGERPNAPGVKYKGVLGTIATVAKTEGPLK. Lys57 is a fatty acid 16:0 binding site. A helical transmembrane segment spans residues 75–97; that stretch reads LYGGLPAGIQRQISFASLRIGLY. The Mitochondrial intermembrane portion of the chain corresponds to 98–117; it reads DTVQEYFNAHRKTPATLGNK. The chain crosses the membrane as a helical span at residues 118 to 134; sequence ISAGLMTGCVTVFIGQP. Over 135–179 the chain is Mitochondrial matrix; that stretch reads TEVAKVRMQAQSSLHWLKPRYSGTYNAYYVIVKTEGFLGLWKGTS. The chain crosses the membrane as a helical span at residues 180-196; that stretch reads LNLTRNVIINCTELVVY. Residues 197–213 lie on the Mitochondrial intermembrane side of the membrane; the sequence is DVLKEALVKNNVLADDI. A helical membrane pass occupies residues 214–233; the sequence is PCHLLAALTAGFCTTALASP. Residues 234–267 lie on the Mitochondrial matrix side of the membrane; that stretch reads VDVVKTRFINSPPGYYPHVHNCALNMLQKEGLRA. At Cys255 the chain carries Cysteine sulfenic acid (-SOH). A helical membrane pass occupies residues 268–290; it reads FFKGFVPSFLRLGSWTVIMHVTF. Fatty acid 16:0 is bound at residue Lys270. The Mitochondrial intermembrane portion of the chain corresponds to 291-308; sequence EQLKKELMKSRQTVDCAT.

Belongs to the mitochondrial carrier (TC 2.A.29) family. In terms of assembly, most probably functions as a monomer. Binds one purine nucleotide per monomer. However, has also been suggested to function as a homodimer or a homotetramer. Tightly associates with cardiolipin in the mitochondrion inner membrane; may stabilize and regulate its activity. Post-translationally, may undergo sulfenylation upon cold exposure. May increase the sensitivity of UCP1 thermogenic function to the activation by noradrenaline probably through structural effects. May undergo ubiquitin-mediated proteasomal degradation. As to expression, brown adipose tissue.

Its subcellular location is the mitochondrion inner membrane. It carries out the reaction H(+)(in) = H(+)(out). Has no constitutive proton transporter activity and has to be activated by long-chain fatty acids/LCFAs. Inhibited by purine nucleotides. Both purine nucleotides and LCFAs bind the cytosolic side of the transporter and directly compete to activate or inhibit it. Activated by noradrenaline and reactive oxygen species. Despite lacking canonical translational encoding for selenocysteine, a small pool of the protein has been observed to selectively incorporate selenocysteine at 'Cys-255'. Selenocysteine-modified protein is highly sensitive to redox modification and may constitute a pool of protein highly sensitive to activation by elevated levels of reactive oxygen species (ROS). In terms of biological role, mitochondrial protein responsible for thermogenic respiration, a specialized capacity of brown adipose tissue and beige fat that participates in non-shivering adaptive thermogenesis to temperature and diet variations and more generally to the regulation of energy balance. Functions as a long-chain fatty acid/LCFA and proton symporter, simultaneously transporting one LCFA and one proton through the inner mitochondrial membrane. However, LCFAs remaining associated with the transporter via their hydrophobic tails, it results in an apparent transport of protons activated by LCFAs. Thereby, dissipates the mitochondrial proton gradient and converts the energy of substrate oxydation into heat instead of ATP. Regulates the production of reactive oxygen species/ROS by mitochondria. The protein is Mitochondrial brown fat uncoupling protein 1 of Suncus murinus (Asian house shrew).